The following is a 194-amino-acid chain: MEHPFQLLMATSIAYLLGSIMGAYWVCRYFQLPDPTESGSGNPGATNIYRLGGPVPATLTLFWDAAKGAAAVCIAAMLGLSPYEQGVTAVAAIVGHMLPAFHHFKGGKGVATVLGAGLALAWQTTLALTLVWAAVVYWKRISSLASLTAALMAPWVAWRLNPEHLALFLILSLFILIRHRENIINLAKGKERSL.

Transmembrane regions (helical) follow at residues 7 to 27, 59 to 79, 86 to 106, 116 to 136, and 157 to 177; these read LLMA…YWVC, LTLF…AMLG, GVTA…HFKG, AGLA…AAVV, and AWRL…FILI.

This sequence belongs to the PlsY family. Probably interacts with PlsX.

Its subcellular location is the cell inner membrane. The enzyme catalyses an acyl phosphate + sn-glycerol 3-phosphate = a 1-acyl-sn-glycero-3-phosphate + phosphate. The protein operates within lipid metabolism; phospholipid metabolism. Catalyzes the transfer of an acyl group from acyl-phosphate (acyl-PO(4)) to glycerol-3-phosphate (G3P) to form lysophosphatidic acid (LPA). This enzyme utilizes acyl-phosphate as fatty acyl donor, but not acyl-CoA or acyl-ACP. The chain is Glycerol-3-phosphate acyltransferase from Hahella chejuensis (strain KCTC 2396).